A 331-amino-acid chain; its full sequence is Cathepsin S (331 aa).

Residues 1-16 form the signal peptide; sequence MKRLVCVLLVCSSAVA. The propeptide at 17-114 is activation peptide; it reads QLHKDPTLDH…ITYKSNPNRI (98 aa). Asn-104 carries an N-linked (GlcNAc...) asparagine glycan. Cystine bridges form between Cys-126–Cys-224, Cys-136–Cys-180, Cys-170–Cys-213, and Cys-272–Cys-320. The active site involves Cys-139. Residues His-278 and Asn-298 contribute to the active site.

This sequence belongs to the peptidase C1 family. In terms of assembly, monomer.

It is found in the lysosome. Its subcellular location is the secreted. The protein resides in the cytoplasmic vesicle. The protein localises to the phagosome. The catalysed reaction is Similar to cathepsin L, but with much less activity on Z-Phe-Arg-|-NHMec, and more activity on the Z-Val-Val-Arg-|-Xaa compound.. Thiol protease. Key protease responsible for the removal of the invariant chain from MHC class II molecules and MHC class II antigen presentation. The bond-specificity of this proteinase is in part similar to the specificities of cathepsin L. This chain is Cathepsin S (CTSS), found in Homo sapiens (Human).